A 142-amino-acid chain; its full sequence is MTMPLQIYNTTRRELAESVLTEVVTTVLQEEGFLIESLVAVYCGNKMIHRINREFLGHDYPTDTITFSYSKGSEIDGEFYISLDAVEENALRYKVGFDEELMRVTIHSALHLAGYQDGKDEERVQMQEKEALYLKRFVTPST.

Zn(2+) contacts are provided by H107, H111, and D117.

Belongs to the endoribonuclease YbeY family. It depends on Zn(2+) as a cofactor.

The protein localises to the cytoplasm. Functionally, single strand-specific metallo-endoribonuclease involved in late-stage 70S ribosome quality control and in maturation of the 3' terminus of the 16S rRNA. In Chlorobium phaeobacteroides (strain DSM 266 / SMG 266 / 2430), this protein is Endoribonuclease YbeY.